We begin with the raw amino-acid sequence, 102 residues long: MANLVSVRRRPYRYPHSAIISSIFLIIIFTPDNLNNGATAFCSQLSPPYLDLQPIFSVLSASRQHHIPAFLLALACPIMGLIPMIKDSSTIPISRLPLLPSF.

This sequence belongs to the UPF0328 family.

The protein is UPF0328 protein ECU10_1820 of Encephalitozoon cuniculi (strain GB-M1) (Microsporidian parasite).